Here is an 85-residue protein sequence, read N- to C-terminus: Sodium channel neurotoxin MeuNaTxalpha-2 (85 aa).

Positions 1-19 (MNYLVMISLALLLMTGVES) are cleaved as a signal peptide. An LCN-type CS-alpha/beta domain is found at 21–83 (RDAYIANDRN…VPIRIPGECR (63 aa)). 4 disulfide bridges follow: cysteine 31–cysteine 82, cysteine 35–cysteine 55, cysteine 41–cysteine 65, and cysteine 45–cysteine 67. Arginine amide is present on arginine 83.

Belongs to the long (4 C-C) scorpion toxin superfamily. Sodium channel inhibitor family. Alpha subfamily. As to expression, expressed by the venom gland.

The protein localises to the secreted. Its function is as follows. Alpha toxins bind voltage-independently at site-3 of sodium channels (Nav) and inhibit the inactivation of the activated channels, thereby blocking neuronal transmission. This toxin inhibits inactivation of Nav1.4/SCN4A (EC(50)=2.23 uM) and drosophila DmNav1 (EC(50)=220 nM). The toxin (1 uM) does not significantly shift the midpoint of activation at the two channels, but induces a significant depolarizing shift in the V(1/2) of inactivation of the channels. In addition, the toxin accelerates the recovery from fast inactivation in Nav1.4/SCN4A and DmNav1. It also shows antimicrobial activity. The sequence is that of Sodium channel neurotoxin MeuNaTxalpha-2 from Mesobuthus eupeus (Lesser Asian scorpion).